The primary structure comprises 131 residues: Antileukoproteinase (131 aa).

An N-terminal signal peptide occupies residues 1–25; sequence MKSCGLLPFTVLLALGILAPWTVEG. WAP domains are found at residues 29–77 and 83–131; these read DAIK…VNPV and VWRK…LPPM. Cystine bridges form between Cys-36/Cys-65, Cys-44/Cys-69, Cys-52/Cys-64, Cys-58/Cys-73, Cys-90/Cys-119, Cys-97/Cys-123, Cys-106/Cys-118, and Cys-112/Cys-127. Residues 85–131 are elastase inhibitory domain; that stretch reads RKPGRCVKTQARCMMLNPPNVCQRDGQCDGKYKCCEGICGKVCLPPM.

Interacts with GRN; interaction protects progranulin from proteolysis. As to expression, detected in bronchial epithelial cells. Detected in bronchoalveolar fluid after infection with M.tuberculosis (at protein level). Highest expression in lung, spleen, intestine and epididymis with lower levels in liver and seminal vesicle. No expression in brain, heart, kidney and muscle.

The protein localises to the secreted. Its function is as follows. Acid-stable proteinase inhibitor with strong affinities for trypsin, chymotrypsin, elastase, and cathepsin G. Modulates the innate immune response after bacterial infection. Contributes to regulate the inflammatory and immune responses to the intracellular parasite L.major. Down-regulates responses to bacterial lipopolysaccharide (LPS). Plays a role in regulating the activation of NF-kappa-B and inflammatory responses. Has antimicrobial activity against mycobacteria, but not against salmonella. Contributes to normal resistance against infection by M.tuberculosis. Required for normal resistance to L.major. Required for normal wound healing, probably by preventing tissue damage by limiting protease activity. Together with ELANE, required for normal differentiation and proliferation of bone marrow myeloid cells. The sequence is that of Antileukoproteinase (Slpi) from Mus musculus (Mouse).